The sequence spans 196 residues: Large ribosomal subunit protein eL15 (196 aa).

Over residues 69-98 (RKGGSRKQRHKAGRRSKRQGVNRLSRRKSI) the composition is skewed to basic residues. 2 disordered regions span residues 69–100 (RKGG…SIQR) and 161–196 (FRGL…RQGK). The segment covering 186–196 (PSVTGNDRQGK) has biased composition (polar residues).

It belongs to the eukaryotic ribosomal protein eL15 family.

The sequence is that of Large ribosomal subunit protein eL15 from Halorubrum lacusprofundi (strain ATCC 49239 / DSM 5036 / JCM 8891 / ACAM 34).